The following is a 344-amino-acid chain: DNA-directed RNA polymerase subunit alpha (344 aa).

The segment at 1-238 (MKVIKTAPLI…KQLGVFGERP (238 aa)) is alpha N-terminal domain (alpha-NTD). Positions 254–344 (AKDLSAKIES…EKLEDKGGND (91 aa)) are alpha C-terminal domain (alpha-CTD).

It belongs to the RNA polymerase alpha chain family. As to quaternary structure, homodimer. The RNAP catalytic core consists of 2 alpha, 1 beta, 1 beta' and 1 omega subunit. When a sigma factor is associated with the core the holoenzyme is formed, which can initiate transcription.

It catalyses the reaction RNA(n) + a ribonucleoside 5'-triphosphate = RNA(n+1) + diphosphate. DNA-dependent RNA polymerase catalyzes the transcription of DNA into RNA using the four ribonucleoside triphosphates as substrates. This chain is DNA-directed RNA polymerase subunit alpha, found in Helicobacter pylori (strain J99 / ATCC 700824) (Campylobacter pylori J99).